A 622-amino-acid chain; its full sequence is Dynein axonemal assembly factor 1 (622 aa).

Over residues methionine 1–aspartate 11 the composition is skewed to polar residues. The segment at methionine 1–proline 80 is disordered. Residues valine 32–glutamate 42 show a composition bias toward basic and acidic residues. The segment covering serine 48–serine 59 has biased composition (low complexity). A compositionally biased stretch (basic and acidic residues) spans serine 62 to proline 80. LRR repeat units lie at residues alanine 101–threonine 123, glycine 124–serine 145, glutamate 146–glutamine 167, lysine 168–proline 189, valine 190–arginine 211, and arginine 215–glutamate 236. Residues asparagine 249 to tryptophan 288 enclose the LRRCT domain. A compositionally biased stretch (basic and acidic residues) spans glutamate 326–glutamate 336. Disordered regions lie at residues glutamate 326–glutamate 360 and glutamate 399–threonine 431. 2 stretches are compositionally biased toward low complexity: residues threonine 337–glutamate 351 and valine 415–threonine 428. The residue at position 349 (serine 349) is a Phosphoserine. Serine 464 and serine 487 each carry phosphoserine. Disordered regions lie at residues isoleucine 480 to proline 503 and arginine 525 to aspartate 622. Polar residues predominate over residues alanine 539–threonine 550.

Belongs to the DNAAF1 family.

It localises to the cell projection. The protein resides in the cilium. Its function is as follows. Cilium-specific protein required for the stability of the ciliary architecture. Plays a role in cytoplasmic preassembly of dynein arms. Involved in regulation of microtubule-based cilia and actin-based brush border microvilli. In Peromyscus polionotus (Oldfield mouse), this protein is Dynein axonemal assembly factor 1 (Dnaaf1).